We begin with the raw amino-acid sequence, 856 residues long: Rod cGMP-specific 3',5'-cyclic phosphodiesterase subunit beta (856 aa).

Position 2 is an N-acetylserine (serine 2). GAF domains lie at 71–220 (NMER…TLNL) and 252–429 (DIER…GWSV). The 334-residue stretch at 481 to 814 (EEDELGILLK…KEWKALADEY (334 aa)) folds into the PDEase domain. The Proton donor role is filled by histidine 557. A divalent metal cation contacts are provided by histidine 561, histidine 597, aspartate 598, and aspartate 718. The segment covering 823–833 (EEKQQQEDRTT) has biased composition (basic and acidic residues). Positions 823–842 (EEKQQQEDRTTAKKAGTEIC) are disordered. The S-geranylgeranyl cysteine moiety is linked to residue cysteine 853. Positions 854–856 (CIL) are cleaved as a propeptide — removed in mature form.

The protein belongs to the cyclic nucleotide phosphodiesterase family. Oligomer composed of two catalytic chains (alpha and beta), an inhibitory chain (gamma) and the delta chain. It depends on a divalent metal cation as a cofactor.

Its subcellular location is the membrane. The protein resides in the cell projection. It localises to the cilium. The protein localises to the photoreceptor outer segment. It carries out the reaction 3',5'-cyclic GMP + H2O = GMP + H(+). Its function is as follows. Rod-specific cGMP phosphodiesterase that catalyzes the hydrolysis of 3',5'-cyclic GMP. Necessary for the formation of a functional phosphodiesterase holoenzyme. Involved in retinal circadian rhythm photoentrainment via modulation of UVA and orange light-induced phase-shift of the retina clock. May participate in processes of transmission and amplification of the visual signal. In Canis lupus familiaris (Dog), this protein is Rod cGMP-specific 3',5'-cyclic phosphodiesterase subunit beta.